We begin with the raw amino-acid sequence, 447 residues long: UDP-N-acetylmuramate--L-alanine ligase (447 aa).

108–114 (GSHGKTS) lines the ATP pocket.

The protein belongs to the MurCDEF family.

Its subcellular location is the cytoplasm. The catalysed reaction is UDP-N-acetyl-alpha-D-muramate + L-alanine + ATP = UDP-N-acetyl-alpha-D-muramoyl-L-alanine + ADP + phosphate + H(+). It functions in the pathway cell wall biogenesis; peptidoglycan biosynthesis. Its function is as follows. Cell wall formation. This chain is UDP-N-acetylmuramate--L-alanine ligase, found in Listeria monocytogenes serotype 4b (strain F2365).